The chain runs to 432 residues: Transcriptional adapter 3 (432 aa).

Lys21 is covalently cross-linked (Glycyl lysine isopeptide (Lys-Gly) (interchain with G-Cter in SUMO2)). Residues 40-69 (IEELDTLQLELETLLSSASRRLRVLEAETQ) adopt a coiled-coil conformation. The interval 87–126 (GRDHELGAPPKHGKPKKQKLEGKAGHGPGPGPGRPKSKNL) is disordered. Lys129 participates in a covalent cross-link: Glycyl lysine isopeptide (Lys-Gly) (interchain with G-Cter in SUMO2). Residues 272–319 (NIISPMEDSPIPDMSGKESGADGASTSPRNQNKPFSVPHTKSLESRIK) form a disordered region. 2 positions are modified to phosphoserine: Ser280 and Ser298. Positions 295–305 (ASTSPRNQNKP) are enriched in polar residues. The stretch at 367–407 (LLRLAKEEVSRQELRQRVRMADNEVMDAFRKIMAARQKKRT) forms a coiled coil. Position 418 is an N6-acetyllysine (Lys418).

It belongs to the NGG1 family. As to quaternary structure, the PCAF complex is composed of a number of TBP-associated factors (TAFS), such as TAF5, TAF5L, TAF6, TAF6L, TAF9, TAF10 and TAF12, PCAF, and also PCAF-associated factors (PAFs), such as TADA2L/ADA2, TADA3L/ADA3 and SPT3. Interacts directly with TADA2L and PCAF and also with the high-risk HPV oncoprotein E6. Component of the STAGA transcription coactivator-HAT complex, at least composed of SUPT3H, GCN5L2, TAF5L, TAF6L, SUPT7L, TADA3L, TAD1L, TAF10, TAF12, TRRAP and TAF9. Component of the TFTC-HAT complex. Component of the ADA2A-containing complex (ATAC), composed of KAT14, KAT2A, TADA2L, TADA3L, ZZ3, MBIP, WDR5, YEATS2, CCDC101 and DR1. Ubiquitously expressed.

The protein resides in the nucleus. Functions as a component of the PCAF complex. The PCAF complex is capable of efficiently acetylating histones in a nucleosomal context. The PCAF complex could be considered as the human version of the yeast SAGA complex. Also known as a coactivator for p53/TP53-dependent transcriptional activation. Component of the ATAC complex, a complex with histone acetyltransferase activity on histones H3 and H4. The polypeptide is Transcriptional adapter 3 (TADA3) (Homo sapiens (Human)).